The following is a 622-amino-acid chain: MNRQESINSFNSDETSSLSDVESQQPQQYIPSESGSKSNMAPNQLKLTRTETVKSLQDMGVSSKAPVPDVNAPQSSKNKIFPEEYTLETPTGLVPVATLHSIGRTSTAISRTRTRQIDGASSPSSNEDALESDNNEKGKEGDSSGANDEAPDLDPEIEFVTFVTGDPENPHNWPAWIRWSYTVLLSILVICVAYGSACISGGLGTVEKKYHVGMEAAILSVSLMVIGFSLGPLIWSPVSDLYGRRVAYFVSMGLYVIFNIPCALAPNLGSLLACRFLCGVWSSSGLCLVGGSIADMFPSETRGKAIAFFAFAPYVGPVVGPLVNGFISVSTGRMDLIFWVNMAFAGVMWIISSAIPETYAPVILKRKAARLRKETGNPKIMTEQEAQGVSMGEMMRACLLRPLYFSVTEPVLVATCFYVCLIYSLLYAFFFAFPVIFGELYGYKDNLVGLMFIPIVIGALWALATTFYCENKYLQIVKQRKPTPEDRLLGAKIGAPFAAIALWILGATAYKHIIWVGPASAGLAFGFGMVLIYYSLNNYIIDCYVQYASSALATKVFLRSAGGAAFPLFTIQMYHKLNLHWGSWLLAFISTAMIALPFAFSYWGKGLRHKLSKKDYSIDSIE.

The span at 1–47 (MNRQESINSFNSDETSSLSDVESQQPQQYIPSESGSKSNMAPNQLKL) shows a compositional bias: polar residues. A disordered region spans residues 1 to 76 (MNRQESINSF…VPDVNAPQSS (76 aa)). Residues 1 to 182 (MNRQESINSF…WPAWIRWSYT (182 aa)) lie on the Cytoplasmic side of the membrane. Ser55 carries the post-translational modification Phosphoserine. Position 98 is a phosphothreonine (Thr98). A phosphoserine mark is found at Ser101 and Ser132. The disordered stretch occupies residues 105 to 152 (TSTAISRTRTRQIDGASSPSSNEDALESDNNEKGKEGDSSGANDEAPD). Residues 183 to 203 (VLLSILVICVAYGSACISGGL) traverse the membrane as a helical segment. The Extracellular portion of the chain corresponds to 204–215 (GTVEKKYHVGME). A helical membrane pass occupies residues 216–236 (AAILSVSLMVIGFSLGPLIWS). Over 237–245 (PVSDLYGRR) the chain is Cytoplasmic. Residues 246–266 (VAYFVSMGLYVIFNIPCALAP) traverse the membrane as a helical segment. Residues 267–275 (NLGSLLACR) are Extracellular-facing. Residues 276-296 (FLCGVWSSSGLCLVGGSIADM) form a helical membrane-spanning segment. Residues 297–305 (FPSETRGKA) lie on the Cytoplasmic side of the membrane. Residues 306–326 (IAFFAFAPYVGPVVGPLVNGF) form a helical membrane-spanning segment. Residues 327–335 (ISVSTGRMD) lie on the Extracellular side of the membrane. A helical transmembrane segment spans residues 336–356 (LIFWVNMAFAGVMWIISSAIP). Residues 357–416 (ETYAPVILKRKAARLRKETGNPKIMTEQEAQGVSMGEMMRACLLRPLYFSVTEPVLVATC) lie on the Cytoplasmic side of the membrane. A helical membrane pass occupies residues 417–437 (FYVCLIYSLLYAFFFAFPVIF). Over 438–446 (GELYGYKDN) the chain is Extracellular. The chain crosses the membrane as a helical span at residues 447–467 (LVGLMFIPIVIGALWALATTF). The Cytoplasmic portion of the chain corresponds to 468–487 (YCENKYLQIVKQRKPTPEDR). The chain crosses the membrane as a helical span at residues 488–508 (LLGAKIGAPFAAIALWILGAT). The Extracellular segment spans residues 509 to 512 (AYKH). Residues 513-533 (IIWVGPASAGLAFGFGMVLIY) traverse the membrane as a helical segment. Residues 534 to 550 (YSLNNYIIDCYVQYASS) are Cytoplasmic-facing. The helical transmembrane segment at 551 to 571 (ALATKVFLRSAGGAAFPLFTI) threads the bilayer. Over 572–583 (QMYHKLNLHWGS) the chain is Extracellular. The helical transmembrane segment at 584–604 (WLLAFISTAMIALPFAFSYWG) threads the bilayer. The Cytoplasmic portion of the chain corresponds to 605-622 (KGLRHKLSKKDYSIDSIE).

It belongs to the major facilitator superfamily. DHA1 family. Polyamines/proton antiporter (TC 2.A.1.2.16) subfamily.

The protein resides in the cell membrane. Cell membrane polyamine/proton antiporter, involved in the detoxification of excess polyamines in the cytoplasm. Recognizes spermine, but not spermidine. The polypeptide is Polyamine transporter 3 (TPO3) (Saccharomyces cerevisiae (strain ATCC 204508 / S288c) (Baker's yeast)).